Consider the following 84-residue polypeptide: Transcription elongation factor 1 homolog (84 aa).

Residues C26, C29, C50, and C53 each contribute to the Zn(2+) site.

It belongs to the ELOF1 family.

The protein resides in the nucleus. Its function is as follows. Transcription elongation factor implicated in the maintenance of proper chromatin structure in actively transcribed regions. The polypeptide is Transcription elongation factor 1 homolog (Caenorhabditis elegans).